Reading from the N-terminus, the 174-residue chain is UPF0340 protein SAB1998c (174 aa).

This sequence belongs to the UPF0340 family.

In Staphylococcus aureus (strain bovine RF122 / ET3-1), this protein is UPF0340 protein SAB1998c.